The primary structure comprises 65 residues: MNNKNLINDVKVTQVKSSIGRKYDQKLTLIGLGLNKINKSVVLKNTDSVQGMLKKVEHLLKIENV.

It belongs to the universal ribosomal protein uL30 family. In terms of assembly, part of the 50S ribosomal subunit.

This Rickettsia bellii (strain OSU 85-389) protein is Large ribosomal subunit protein uL30.